Reading from the N-terminus, the 289-residue chain is Bifunctional protein FolD (289 aa).

Residues 165-167 (GAS) and Ser190 contribute to the NADP(+) site.

The protein belongs to the tetrahydrofolate dehydrogenase/cyclohydrolase family. In terms of assembly, homodimer.

It catalyses the reaction (6R)-5,10-methylene-5,6,7,8-tetrahydrofolate + NADP(+) = (6R)-5,10-methenyltetrahydrofolate + NADPH. The enzyme catalyses (6R)-5,10-methenyltetrahydrofolate + H2O = (6R)-10-formyltetrahydrofolate + H(+). It participates in one-carbon metabolism; tetrahydrofolate interconversion. Functionally, catalyzes the oxidation of 5,10-methylenetetrahydrofolate to 5,10-methenyltetrahydrofolate and then the hydrolysis of 5,10-methenyltetrahydrofolate to 10-formyltetrahydrofolate. This chain is Bifunctional protein FolD, found in Ralstonia pickettii (strain 12J).